We begin with the raw amino-acid sequence, 145 residues long: Cuticle protein 5 (145 aa).

This is Cuticle protein 5 from Blaberus craniifer (Death's head cockroach).